Here is a 500-residue protein sequence, read N- to C-terminus: NAD(P)H-quinone oxidoreductase chain 4, chloroplastic (500 aa).

Helical transmembrane passes span 4–24, 37–57, 87–107, 113–130, 134–154, 167–187, 208–228, 242–262, 272–292, 305–325, 330–350, 386–406, 416–436, and 462–482; these read FPWLTIIVVLPISAGSSIGFL, ICICILELLLTTYAFCYHFQL, MGPVLLTGFITTLATLAAWPV, LFHFLMLAMYSGQIGSFS, LLLFFMMWELELIPIYLLLSL, FILYTAGGSIFLLMGVSGMGL, ALEIIFYIGFFIAYAAKSPII, HYSTCMLLAGILLKMGAYGLV, AHSIFSPWLMIIGAIQIIYAA, IAYSSVSHMGFITIGIGSITD, GSILQIISHGFIGAALFFLAG, LALPGMSGFVAESVVFLGIIT, ILITFVMAIGMILTPIYSLSM, and LFILICILLPVIGIGIYPDFV.

This sequence belongs to the complex I subunit 4 family.

The protein localises to the plastid. It is found in the chloroplast thylakoid membrane. It carries out the reaction a plastoquinone + NADH + (n+1) H(+)(in) = a plastoquinol + NAD(+) + n H(+)(out). It catalyses the reaction a plastoquinone + NADPH + (n+1) H(+)(in) = a plastoquinol + NADP(+) + n H(+)(out). The polypeptide is NAD(P)H-quinone oxidoreductase chain 4, chloroplastic (Illicium oligandrum (Star anise)).